Consider the following 225-residue polypeptide: Golgi to ER traffic protein 1 (225 aa).

A topological domain (lumenal) is located at residue methionine 1. A helical membrane pass occupies residues 2–21 (NWVIIAALFFVIINKLLQYT). At 22-107 (SRYQEAWINK…SQSKLFNRLK (86 aa)) the chain is on the cytoplasmic side. The stretch at 37–104 (DISSLSKEYS…AKDSQSKLFN (68 aa)) forms a coiled coil. Residues 108–128 (LLTLTLPFMILKLWKGKFIVY) traverse the membrane as a helical segment. Topologically, residues 129–172 (DIPTKDTFPVIVNGVLSQGLLYIPLLPINFLRGIDPNKHILVPG) are lumenal. The helical transmembrane segment at 173–189 (VSLGIWLMALTKTIDTV) threads the bilayer. Topologically, residues 190–225 (EFIVKQLVFQPVVSKQVKEKTKEKVVELKTTEAELD) are cytoplasmic.

It belongs to the WRB/GET1 family. As to quaternary structure, component of the Golgi to ER traffic (GET) complex, which is composed of GET1, GET2 and GET3. Within the complex, GET1 and GET2 form a heterotetramer which is stabilized by phosphatidylinositol binding and which binds to the GET3 homodimer.

The protein resides in the endoplasmic reticulum membrane. It is found in the golgi apparatus membrane. Functionally, required for the post-translational delivery of tail-anchored (TA) proteins to the endoplasmic reticulum. Together with GET2, acts as a membrane receptor for soluble GET3, which recognizes and selectively binds the transmembrane domain of TA proteins in the cytosol. The GET complex cooperates with the HDEL receptor ERD2 to mediate the ATP-dependent retrieval of resident ER proteins that contain a C-terminal H-D-E-L retention signal from the Golgi to the ER. This Vanderwaltozyma polyspora (strain ATCC 22028 / DSM 70294 / BCRC 21397 / CBS 2163 / NBRC 10782 / NRRL Y-8283 / UCD 57-17) (Kluyveromyces polysporus) protein is Golgi to ER traffic protein 1.